The chain runs to 73 residues: Large ribosomal subunit protein bL31 (73 aa).

This sequence belongs to the bacterial ribosomal protein bL31 family. Type A subfamily. In terms of assembly, part of the 50S ribosomal subunit.

In terms of biological role, binds the 23S rRNA. In Bartonella tribocorum (strain CIP 105476 / IBS 506), this protein is Large ribosomal subunit protein bL31.